The following is a 161-amino-acid chain: Small ribosomal subunit protein uS9 (161 aa).

Positions 1–21 (MATLQSLADLNRANTQTSNPE) are enriched in polar residues. A disordered region spans residues 1–25 (MATLQSLADLNRANTQTSNPENEAP).

It belongs to the universal ribosomal protein uS9 family.

This chain is Small ribosomal subunit protein uS9, found in Methylorubrum populi (strain ATCC BAA-705 / NCIMB 13946 / BJ001) (Methylobacterium populi).